We begin with the raw amino-acid sequence, 161 residues long: Transcriptional repressor NrdR (161 aa).

A compositionally biased stretch (polar residues) spans 1-11 (MRCPSCNSLDT). The interval 1–20 (MRCPSCNSLDTQVKDSRPTE) is disordered. The segment at 3 to 34 (CPSCNSLDTQVKDSRPTEDSSVIRRRRVCVTC) is a zinc-finger region. Residues 49–139 (LTVIKRNGRR…VYRNFREAKD (91 aa)) enclose the ATP-cone domain.

The protein belongs to the NrdR family. Zn(2+) serves as cofactor.

Functionally, negatively regulates transcription of bacterial ribonucleotide reductase nrd genes and operons by binding to NrdR-boxes. The protein is Transcriptional repressor NrdR of Bradyrhizobium sp. (strain ORS 278).